A 1415-amino-acid chain; its full sequence is DNA-directed RNA polymerase subunit beta' (1415 aa).

Zn(2+)-binding residues include cysteine 72, cysteine 74, cysteine 87, and cysteine 90. Residues aspartate 463, aspartate 465, and aspartate 467 each contribute to the Mg(2+) site. Residues cysteine 811, cysteine 885, cysteine 892, and cysteine 895 each contribute to the Zn(2+) site.

The protein belongs to the RNA polymerase beta' chain family. The RNAP catalytic core consists of 2 alpha, 1 beta, 1 beta' and 1 omega subunit. When a sigma factor is associated with the core the holoenzyme is formed, which can initiate transcription. Mg(2+) is required as a cofactor. Requires Zn(2+) as cofactor.

It catalyses the reaction RNA(n) + a ribonucleoside 5'-triphosphate = RNA(n+1) + diphosphate. In terms of biological role, DNA-dependent RNA polymerase catalyzes the transcription of DNA into RNA using the four ribonucleoside triphosphates as substrates. The protein is DNA-directed RNA polymerase subunit beta' of Cereibacter sphaeroides (strain ATCC 17029 / ATH 2.4.9) (Rhodobacter sphaeroides).